The chain runs to 97 residues: YcgL domain-containing protein Tcr_0238 (97 aa).

Residues 3–87 (LLVSAYKSAK…SEIEKMGDMP (85 aa)) enclose the YcgL domain. The tract at residues 78–97 (SEIEKMGDMPPPPEHLDNIF) is disordered.

This chain is YcgL domain-containing protein Tcr_0238, found in Hydrogenovibrio crunogenus (strain DSM 25203 / XCL-2) (Thiomicrospira crunogena).